The following is a 365-amino-acid chain: S-type anion channel SLAH4 (365 aa).

Topologically, residues 1–25 (MEIPSQEIHIMIDNTISRRKERKTN) are cytoplasmic. A helical membrane pass occupies residues 26–46 (LADAEPIVLMSVLSSLHAGYF). Residues 47–73 (RISLSLCSQALLWKIMVHLHSELPSMA) are Extracellular-facing. The helical transmembrane segment at 74–94 (YYLLWYLALATQVSLCFLYAF) threads the bilayer. Residues 95–106 (KCIFLFDMVKEE) lie on the Cytoplasmic side of the membrane. A helical transmembrane segment spans residues 107–127 (FSHYIGVNYLYAPSISCLLLL). Topologically, residues 128-131 (QSAP) are extracellular. The helical transmembrane segment at 132–152 (MIEPHSVLYQTLFWIFAVPVL) threads the bilayer. Over 153–168 (TLDTKLYGQWFTTEKR) the chain is Cytoplasmic. The helical transmembrane segment at 169–189 (FLSIMANPASQVSVIANLVAA) threads the bilayer. At 190–199 (RGAAEMGWKE) the chain is on the extracellular side. The helical transmembrane segment at 200–220 (CALCLFSLGMVHYLVIFVTLY) threads the bilayer. The Cytoplasmic segment spans residues 221-235 (QRLPGGNNFPTTLRP). A helical transmembrane segment spans residues 236–256 (VFFLFFAAPATASLAWNSICG). A topological domain (extracellular) is located at residue N257. Residues 258 to 278 (FDTIAKMLFFLSLFIFISLVC) traverse the membrane as a helical segment. Residues 279–291 (RPNLLKKSIKRFN) lie on the Cytoplasmic side of the membrane. Residues 292-312 (VAWWAYSFPITFLALNSVQYA) traverse the membrane as a helical segment. The Extracellular segment spans residues 313 to 321 (QEVKDHVAS). Residues 322 to 342 (VLMFIFSSMSVLIFISVMLLT) traverse the membrane as a helical segment. Topologically, residues 343 to 365 (AANSKRLLRRDHVLWSSTGPKDK) are cytoplasmic.

This sequence belongs to the SLAC1 S-type anion channel family. As to quaternary structure, homotrimer.

It localises to the cell membrane. In terms of biological role, slow, weak voltage-dependent S-type anion efflux channel involved in maintenance of anion homeostasis. This is S-type anion channel SLAH4 (SLAH4) from Arabidopsis thaliana (Mouse-ear cress).